A 206-amino-acid chain; its full sequence is Ribosomal RNA large subunit methyltransferase E (206 aa).

S-adenosyl-L-methionine-binding residues include Gly60, Trp62, Asp80, Asn96, and Asp121. Catalysis depends on Lys161, which acts as the Proton acceptor.

This sequence belongs to the class I-like SAM-binding methyltransferase superfamily. RNA methyltransferase RlmE family.

The protein localises to the cytoplasm. The catalysed reaction is uridine(2552) in 23S rRNA + S-adenosyl-L-methionine = 2'-O-methyluridine(2552) in 23S rRNA + S-adenosyl-L-homocysteine + H(+). Functionally, specifically methylates the uridine in position 2552 of 23S rRNA at the 2'-O position of the ribose in the fully assembled 50S ribosomal subunit. This Francisella philomiragia subsp. philomiragia (strain ATCC 25017 / CCUG 19701 / FSC 153 / O#319-036) protein is Ribosomal RNA large subunit methyltransferase E.